Here is a 129-residue protein sequence, read N- to C-terminus: Small ribosomal subunit protein uS8 (129 aa).

Belongs to the universal ribosomal protein uS8 family. In terms of assembly, part of the 30S ribosomal subunit.

Functionally, one of the primary rRNA binding proteins, it binds directly to 16S rRNA central domain where it helps coordinate assembly of the platform of the 30S subunit. The protein is Small ribosomal subunit protein uS8 of Methanothrix thermoacetophila (strain DSM 6194 / JCM 14653 / NBRC 101360 / PT) (Methanosaeta thermophila).